The primary structure comprises 123 residues: Unknown 12C protein (123 aa).

The N-terminal stretch at 1–17 (MMSALFLVLSVSLLVSG) is a signal peptide.

In terms of processing, contains 6 disulfide bonds. In terms of tissue distribution, expressed in acontia, a specialised envenomation structure laden with batteries of venom-containing nematocysts found only in the superfamily Metridioidea.

Its subcellular location is the secreted. It localises to the nematocyst. Its function is as follows. Cysteine-rich protein with probable toxin activity. This Calliactis polypus (Hermit crab anemone) protein is Unknown 12C protein.